Consider the following 534-residue polypeptide: Chaperonin GroEL, chloroplastic (534 aa).

ATP is bound by residues 29 to 32 (TLGP), 86 to 90 (DGTTT), G414, and D496.

Belongs to the chaperonin (HSP60) family. Forms a cylinder of 14 subunits composed of two heptameric rings stacked back-to-back. Interacts with the co-chaperonin GroES.

It is found in the plastid. Its subcellular location is the chloroplast. It catalyses the reaction ATP + H2O + a folded polypeptide = ADP + phosphate + an unfolded polypeptide.. Functionally, together with its co-chaperonin GroES, plays an essential role in assisting protein folding. The GroEL-GroES system forms a nano-cage that allows encapsulation of the non-native substrate proteins and provides a physical environment optimized to promote and accelerate protein folding. This chain is Chaperonin GroEL, chloroplastic, found in Galdieria sulphuraria (Red alga).